Here is a 408-residue protein sequence, read N- to C-terminus: Endo-1,4-beta-xylanase A (408 aa).

A signal peptide spans 1-19 (MKLSASFAALALLLPFVQA). In terms of domain architecture, CBM1 spans 20–55 (QSPVWGQCGGIGWTGPTTCTAGNVCQEYSAYYSQCI). Positions 64-89 (TSVSTAPNPPPTSHTSTSSAPSGAST) are disordered. The segment covering 76-89 (SHTSTSSAPSGAST) has biased composition (low complexity). In terms of domain architecture, GH10 spans 88-405 (STSTAKLNTL…KPAYDGIAIG (318 aa)). Catalysis depends on Glu-222, which acts as the Proton donor. The Nucleophile role is filled by Glu-327. A disulfide bridge links Cys-355 with Cys-361.

This sequence belongs to the glycosyl hydrolase 10 (cellulase F) family.

It is found in the secreted. The catalysed reaction is Endohydrolysis of (1-&gt;4)-beta-D-xylosidic linkages in xylans.. The protein operates within glycan degradation; xylan degradation. Its function is as follows. Endo-1,4-beta-xylanase involved in the hydrolysis of xylan, a major structural heterogeneous polysaccharide found in plant biomass representing the second most abundant polysaccharide in the biosphere, after cellulose. The chain is Endo-1,4-beta-xylanase A (xynA) from Phanerodontia chrysosporium (White-rot fungus).